Consider the following 179-residue polypeptide: Riboflavin kinase (179 aa).

Gly-61–Arg-66 lines the CDP pocket. Residues Thr-90 and Asn-92 each contribute to the Mg(2+) site. FMN is bound by residues Thr-147 and Glu-155. Val-160–Arg-163 contacts CDP.

This sequence belongs to the archaeal riboflavin kinase family. Mg(2+) is required as a cofactor.

It carries out the reaction riboflavin + CTP = CDP + FMN + H(+). It participates in cofactor biosynthesis; FMN biosynthesis; FMN from riboflavin (CTP route): step 1/1. Its function is as follows. Catalyzes the CTP-dependent phosphorylation of riboflavin (vitamin B2) to form flavin mononucleotide (FMN). In Ignicoccus hospitalis (strain KIN4/I / DSM 18386 / JCM 14125), this protein is Riboflavin kinase.